The sequence spans 604 residues: Aspartate--tRNA(Asp/Asn) ligase (604 aa).

An L-aspartate-binding site is contributed by glutamate 168. The tract at residues 192-195 (QLFK) is aspartate. Arginine 214 contacts L-aspartate. Residues 214–216 (RDE) and glutamine 223 each bind ATP. Histidine 446 contacts L-aspartate. Glutamate 480 lines the ATP pocket. Arginine 487 is an L-aspartate binding site. Residue 532–535 (GWDR) participates in ATP binding. Residues 575-604 (LEAGVDARPKPEARAQAGTAGPAAPVADPT) are disordered. Residues 577–587 (AGVDARPKPEA) are compositionally biased toward basic and acidic residues. The segment covering 588-604 (RAQAGTAGPAAPVADPT) has biased composition (low complexity).

The protein belongs to the class-II aminoacyl-tRNA synthetase family. Type 1 subfamily. Homodimer.

It is found in the cytoplasm. It carries out the reaction tRNA(Asx) + L-aspartate + ATP = L-aspartyl-tRNA(Asx) + AMP + diphosphate. Aspartyl-tRNA synthetase with relaxed tRNA specificity since it is able to aspartylate not only its cognate tRNA(Asp) but also tRNA(Asn). Reaction proceeds in two steps: L-aspartate is first activated by ATP to form Asp-AMP and then transferred to the acceptor end of tRNA(Asp/Asn). This Salinispora arenicola (strain CNS-205) protein is Aspartate--tRNA(Asp/Asn) ligase.